The chain runs to 2542 residues: Talin-2 (2542 aa).

The 319-residue stretch at 88–406 folds into the FERM domain; sequence RPQKIRMLDG…GYIDIILKKK (319 aa). Residues 312-406 form an interaction with PIP5K1C region; that stretch reads GVSFFLVKEK…GYIDIILKKK (95 aa). Residues S428, S449, S623, and S1023 each carry the phosphoserine modification. Y1665 carries the post-translational modification Phosphotyrosine. The residue at position 1843 (T1843) is a Phosphothreonine. Residues 2294-2533 enclose the I/LWEQ domain; the sequence is TEWVDPEDPT…QIRQQQYKFL (240 aa).

In terms of assembly, interacts directly with PIP5K1C.

Its subcellular location is the cytoplasm. It is found in the cell junction. The protein localises to the focal adhesion. It localises to the synapse. The protein resides in the cell membrane. Its subcellular location is the cytoskeleton. Functionally, as a major component of focal adhesion plaques that links integrin to the actin cytoskeleton, may play an important role in cell adhesion. Recruits PIP5K1C to focal adhesion plaques and strongly activates its kinase activity. The protein is Talin-2 (TLN2) of Homo sapiens (Human).